A 188-amino-acid chain; its full sequence is FLFARTMIGVFKNIEYMCSRTNSKTWGKEAWKKIVVCVVSDGRAKINQRTKAVLAGLGVYQDGIAKQQVNGKDVTAHIYEYTTQIGMELKGTQVHLKPRSGVPVQMIFCLKEKNQKKINSHRWFFQAFGRVLDPNICVLLDAGTKPGRDSIYHLWRAFDLHPMCGGACGEIKTMLSHGKKLINPLVAA.

Belongs to the chitin synthase family. Class I subfamily.

The protein localises to the cell membrane. It catalyses the reaction [(1-&gt;4)-N-acetyl-beta-D-glucosaminyl](n) + UDP-N-acetyl-alpha-D-glucosamine = [(1-&gt;4)-N-acetyl-beta-D-glucosaminyl](n+1) + UDP + H(+). Polymerizes chitin, a structural polymer of the cell wall and septum, by transferring the sugar moiety of UDP-GlcNAc to the non-reducing end of the growing chitin polymer. In Ajellomyces dermatitidis (Blastomyces dermatitidis), this protein is Chitin synthase 1 (CHS1).